The sequence spans 1097 residues: Protein toll (1097 aa).

Residues 1–27 (MSRLKAASELALLVIILQLLQWPGSEA) form the signal peptide. Topologically, residues 28-807 (SFGRDACSEM…ICPAEKGVFI (780 aa)) are extracellular. Cystine bridges form between cysteine 34–cysteine 45, cysteine 43–cysteine 56, and cysteine 79–cysteine 107. Residues asparagine 80, asparagine 140, and asparagine 175 are each glycosylated (N-linked (GlcNAc...) asparagine). LRR repeat units follow at residues 175 to 195 (NLSH…LFDD), 198 to 219 (NLES…IFGK), 222 to 243 (KLKQ…DFEG), 246 to 267 (SVLG…VFAH), 270 to 291 (NVTD…LFDH), 294 to 314 (HLNE…PSRL), 320 to 340 (ELQI…LFEH), 343 to 364 (QITN…LLEH), 367 to 388 (NLLS…LFAH), 391 to 412 (NLTD…IFSN), 415 to 436 (NLVT…AFVS), 439 to 460 (GLRH…LDIM), 474 to 495 (GLLT…WKNT), 498 to 521 (QLRE…AFLS), and 523 to 544 (NRLH…EDVH). The N-linked (GlcNAc...) asparagine glycan is linked to asparagine 235. N-linked (GlcNAc...) asparagine glycosylation is found at asparagine 270 and asparagine 275. Asparagine 346 carries an N-linked (GlcNAc...) asparagine glycan. A glycan (N-linked (GlcNAc...) asparagine) is linked at asparagine 391. N-linked (GlcNAc...) asparagine glycosylation is found at asparagine 482, asparagine 508, and asparagine 528. One can recognise an LRRCT 1 domain in the interval 561 to 620 (NPLVCDCTILWFIQLVRGVHKPQYSRQFKLRTDRLVCSQPNVLEGTPVRQIEPQTLICPL). Intrachain disulfides connect cysteine 565/cysteine 597, cysteine 567/cysteine 618, cysteine 631/cysteine 637, and cysteine 635/cysteine 650. An LRRNT domain is found at 622 to 663 (FSDDPRERKCPRGCNCHVRTYDKALVINCHSGNLTHVPRLPN). N-linked (GlcNAc...) asparagine glycans are attached at residues asparagine 654, asparagine 677, asparagine 703, asparagine 715, asparagine 730, and asparagine 738. LRR repeat units lie at residues 669–690 (QLME…NTPG), 693–713 (SVTS…DQLP), and 715–738 (NLTH…GFLN). The LRRCT 2 domain occupies 751-801 (NPWMCDCTAKPLLLFTQDNFERIGDRNEMMCVNAEMPTRMVELSTNDICPA). Disulfide bonds link cysteine 755–cysteine 781 and cysteine 757–cysteine 799. The chain crosses the membrane as a helical span at residues 808–828 (ALAVVIALTGLLAGFTAALYY). The Cytoplasmic segment spans residues 829–1097 (KFQTEIKIWL…INTNAKQSDV (269 aa)). In terms of domain architecture, TIR spans 857 to 993 (KKFDAFISYS…WFWDKLRFAL (137 aa)).

Belongs to the Toll-like receptor family. In the absence of ligand, forms a low-affinity disulfide-linked homodimer. In the presence of ligand, crystal structures show one Tl molecule bound to a spaetzle C-106 homodimer. However, the active complex probably consists of two Tl molecules bound to a spaetzle C-106 homodimer. This is supported by in vitro experiments which also show binding of the spaetzle C-106 dimer to 2 Tl receptors. Ligand binding induces conformational changes in the extracellular domain of Tl. This may enable a secondary homodimerization interface at the C-terminus of the Tl extracellular domain. In early embryos, concentrated in the pseudocleavage furrows that form transiently between nuclei before cellularization and in the cleavage furrows during cellularization (at protein level). Later, found on cells in the mesectoderm, stomodeum, proctodeum, anterior and posterior midguts, splanchnopleura, salivary gland placode and adjacent to the segmentally repeated tracheal placodes (at protein level). During and after germ band shortening, localized in a number of cell types, including the salivary gland, foregut, hindgut, Malpighian tubules and epidermis (at protein level). In embryos, high expression in M13 with comparatively low expression in M12.

The protein localises to the cell membrane. It is found in the cytoplasm. Receptor for the cleaved activated form of spz, spaetzle C-106. Binding to spaetzle C-106 activates the Toll signaling pathway and induces expression of the antifungal peptide drosomycin. Component of the extracellular signaling pathway that establishes dorsal-ventral polarity in the embryo. Promotes heterophilic cellular adhesion. Involved in synaptic targeting of motoneurons RP5 and V to muscle 12 (M12); functions as a repulsive cue inhibiting motoneuron synapse formation on muscle 13 (M13) to guide RP5 and V to the neighboring M12, where its expression is repressed by tey. May also function in embryonic neuronal survival and the synaptic targeting of SNa motoneurons. The polypeptide is Protein toll (Drosophila melanogaster (Fruit fly)).